We begin with the raw amino-acid sequence, 876 residues long: Leucine--tRNA ligase (876 aa).

Positions 43–53 match the 'HIGH' region motif; the sequence is PYPSGRIHMGH. Residues 630–634 carry the 'KMSKS' region motif; it reads KMSKS. Residue K633 coordinates ATP.

The protein belongs to the class-I aminoacyl-tRNA synthetase family.

It is found in the cytoplasm. The catalysed reaction is tRNA(Leu) + L-leucine + ATP = L-leucyl-tRNA(Leu) + AMP + diphosphate. This Methylocella silvestris (strain DSM 15510 / CIP 108128 / LMG 27833 / NCIMB 13906 / BL2) protein is Leucine--tRNA ligase.